A 228-amino-acid polypeptide reads, in one-letter code: 2-C-methyl-D-erythritol 4-phosphate cytidylyltransferase (228 aa).

The protein belongs to the IspD/TarI cytidylyltransferase family. IspD subfamily.

It carries out the reaction 2-C-methyl-D-erythritol 4-phosphate + CTP + H(+) = 4-CDP-2-C-methyl-D-erythritol + diphosphate. It functions in the pathway isoprenoid biosynthesis; isopentenyl diphosphate biosynthesis via DXP pathway; isopentenyl diphosphate from 1-deoxy-D-xylulose 5-phosphate: step 2/6. Catalyzes the formation of 4-diphosphocytidyl-2-C-methyl-D-erythritol from CTP and 2-C-methyl-D-erythritol 4-phosphate (MEP). The sequence is that of 2-C-methyl-D-erythritol 4-phosphate cytidylyltransferase from Halalkalibacterium halodurans (strain ATCC BAA-125 / DSM 18197 / FERM 7344 / JCM 9153 / C-125) (Bacillus halodurans).